The primary structure comprises 525 residues: GMP synthase [glutamine-hydrolyzing] (525 aa).

One can recognise a Glutamine amidotransferase type-1 domain in the interval 9-207; that stretch reads RILILDFGSQ…VRDICQCEAL (199 aa). The active-site Nucleophile is cysteine 86. Catalysis depends on residues histidine 181 and glutamate 183. One can recognise a GMPS ATP-PPase domain in the interval 208 to 400; the sequence is WTPAKIIDDA…LGLPYNMLYR (193 aa). 235–241 is a binding site for ATP; it reads SGGVDSS.

In terms of assembly, homodimer.

It carries out the reaction XMP + L-glutamine + ATP + H2O = GMP + L-glutamate + AMP + diphosphate + 2 H(+). Its pathway is purine metabolism; GMP biosynthesis; GMP from XMP (L-Gln route): step 1/1. Functionally, catalyzes the synthesis of GMP from XMP. The chain is GMP synthase [glutamine-hydrolyzing] from Pectobacterium carotovorum subsp. carotovorum (strain PC1).